The following is a 339-amino-acid chain: Nitrilase 2 (339 aa).

Serine 2 carries the post-translational modification N-acetylserine. The 273-residue stretch at 18-290 (VRATIVQAST…EGLITADLDL (273 aa)) folds into the CN hydrolase domain. The Proton acceptor role is filled by glutamate 58. The active-site Proton donor is lysine 145. Catalysis depends on cysteine 179, which acts as the Nucleophile.

This sequence belongs to the carbon-nitrogen hydrolase superfamily. Nitrilase family.

The protein resides in the cell membrane. It carries out the reaction a nitrile + 2 H2O = a carboxylate + NH4(+). Functionally, can convert indole-3-acetonitrile to the plant hormone indole-3-acetic acid. This Arabidopsis thaliana (Mouse-ear cress) protein is Nitrilase 2 (NIT2).